Reading from the N-terminus, the 482-residue chain is Glutamyl-tRNA(Gln) amidotransferase subunit A (482 aa).

Active-site charge relay system residues include lysine 75 and serine 150. The active-site Acyl-ester intermediate is the serine 174.

It belongs to the amidase family. GatA subfamily. Heterotrimer of A, B and C subunits.

It catalyses the reaction L-glutamyl-tRNA(Gln) + L-glutamine + ATP + H2O = L-glutaminyl-tRNA(Gln) + L-glutamate + ADP + phosphate + H(+). Allows the formation of correctly charged Gln-tRNA(Gln) through the transamidation of misacylated Glu-tRNA(Gln) in organisms which lack glutaminyl-tRNA synthetase. The reaction takes place in the presence of glutamine and ATP through an activated gamma-phospho-Glu-tRNA(Gln). The chain is Glutamyl-tRNA(Gln) amidotransferase subunit A from Thermosynechococcus vestitus (strain NIES-2133 / IAM M-273 / BP-1).